A 245-amino-acid chain; its full sequence is Eukaryotic translation initiation factor 3 subunit K (245 aa).

The region spanning tyrosine 46–asparagine 227 is the PCI domain.

It belongs to the eIF-3 subunit K family. In terms of assembly, component of the eukaryotic translation initiation factor 3 (eIF-3) complex.

The protein resides in the cytoplasm. Its function is as follows. Component of the eukaryotic translation initiation factor 3 (eIF-3) complex, which is involved in protein synthesis of a specialized repertoire of mRNAs and, together with other initiation factors, stimulates binding of mRNA and methionyl-tRNAi to the 40S ribosome. The eIF-3 complex specifically targets and initiates translation of a subset of mRNAs involved in cell proliferation. The chain is Eukaryotic translation initiation factor 3 subunit K from Botryotinia fuckeliana (strain B05.10) (Noble rot fungus).